A 544-amino-acid polypeptide reads, in one-letter code: MASLQLYGVKTPGLALSSKRLEFASKGACFSVTLPSSSAVFRDVEHSCRNIGLRVSCEALRVDLLQRKEPETCDSSGTGKELTCVMKFGGSSVESAERMKEVANLILSFPDERPVIVLSAMGKTTNKLLKAGEKAVTCGVTNVESIEELSFIKELHLRTAHELGVETTVIEKHLEGLHQLLKGISMMKELTLRTRDYLVSFGECMSTRLFSAYLNKIGHKARQYDAFEIGFITTDDFTNADILEATYPAVSKTLVGDWSKENAVPVVTGYLGKGWRSCAITTLGRGGSDLTATTIGKALGLREIQVWKDVDGVLTCDPNIYPGAQSVPYLTFDEAAELAYFGAQVLHPLSMRPARDGDIPVRVKNSYNPTAPGTVITRSRDMSKAVLTSIVLKRNVTMLDIASTRMLGQYGFLAKVFTTFEDLGISVDVVATSEVSISLTLDPAKLWGRELIQRVNELDNLVEELEKIAVVKLLQRRSIISLIGNVQKSSLILEKVFQVFRSNGVNVQMISQGASKVNISLIVNDEEAEQCVRALHSAFFETDP.

A chloroplast-targeting transit peptide spans 1 to 84; the sequence is MASLQLYGVK…SSGTGKELTC (84 aa). Lys87, Gly90, and Ser119 together coordinate ATP. Glu203 serves as a coordination point for substrate. 2 ACT domains span residues 401–479 and 481–544; these read IAST…RRSI and SLIG…ETDP.

Belongs to the aspartokinase family. As to expression, expressed in stems, leaves, floral organs and young seedlings.

It is found in the plastid. Its subcellular location is the chloroplast. The enzyme catalyses L-aspartate + ATP = 4-phospho-L-aspartate + ADP. It functions in the pathway amino-acid biosynthesis; L-lysine biosynthesis via DAP pathway; (S)-tetrahydrodipicolinate from L-aspartate: step 1/4. It participates in amino-acid biosynthesis; L-methionine biosynthesis via de novo pathway; L-homoserine from L-aspartate: step 1/3. Its pathway is amino-acid biosynthesis; L-threonine biosynthesis; L-threonine from L-aspartate: step 1/5. With respect to regulation, allosterically inhibited by lysine, but not by S-adenosyl-L-methionine (SAM). K(0.5) for lysine in the presence of physiological concentrations of substrates is 12.5 uM. No inhibition by threonine or leucine and no activation or inhibition by alanine, cysteine, isoleucine, serine, valine, methionine, glutamine, asparagine, glutamic acid or arginine. Its function is as follows. Involved in the first step of essential amino acids lysine, threonine, methionine and isoleucine synthesis via the aspartate-family pathway. In Arabidopsis thaliana (Mouse-ear cress), this protein is Aspartokinase 2, chloroplastic (AK2).